Reading from the N-terminus, the 48-residue chain is U-actitoxin-Cgg3 (48 aa).

3 cysteine pairs are disulfide-bonded: Cys-5–Cys-41, Cys-7–Cys-33, and Cys-23–Cys-42. Serine amide is present on Ser-46. Positions Gly-47–Arg-48 are cleaved as a propeptide — removed in mature form.

The protein belongs to the sea anemone type 3 (BDS) potassium channel toxin family.

The protein resides in the secreted. Neurotoxin that induces paralysis when injected into crabs. May function in antimicrobial activity as it displays inhibitory activity towards the B.licheniformis enzyme subtilisin A (SUBTA) and the recombinant S.maltophilia protease 1 (rStmPr1) enzyme. Also displays inhibitory activity against various proteases including the porcine pancreatic elastase (PPE) and proteinase K (PK). In Condylactis gigantea (Giant Caribbean anemone), this protein is U-actitoxin-Cgg3.